The primary structure comprises 239 residues: Ribosomal RNA small subunit methyltransferase G (239 aa).

Residues glycine 76, phenylalanine 81, 99-101 (DSS), 128-129 (IE), and arginine 147 contribute to the S-adenosyl-L-methionine site.

This sequence belongs to the methyltransferase superfamily. RNA methyltransferase RsmG family.

The protein resides in the cytoplasm. Its function is as follows. Specifically methylates the N7 position of a guanine in 16S rRNA. In Prochlorococcus marinus subsp. pastoris (strain CCMP1986 / NIES-2087 / MED4), this protein is Ribosomal RNA small subunit methyltransferase G.